Reading from the N-terminus, the 282-residue chain is MGIESPTASSYIKHHLQNLTYGQHPDGTWGLAHDAKEAADMGFWAIHVDTMAISIALGFLFLWLFRKAAKKISADTPSGLQNFVELMVEFVDGSVKETFHGKSKVIAPLALTIFVWVFLMNFMDLIPVDFLPATAQWIGVTLFGADPHHVYFKFVPTTDINATLGMSLSVFVLIVFYSIKVKGISGFVGELTLQPFGKWMIPFNLLLEGVGLLAKPVSLALRLFGNLYAGELIFILIAILPWGVQWALSVPWAIFHILIIVLQAFIFMMLTIVYLSMAHENH.

Helical transmembrane passes span 45-65 (AIHV…LWLF), 106-126 (IAPL…MDLI), 160-179 (INAT…FYSI), 232-252 (LIFI…SVPW), and 253-273 (AIFH…LTIV).

It belongs to the ATPase A chain family. In terms of assembly, F-type ATPases have 2 components, CF(1) - the catalytic core - and CF(0) - the membrane proton channel. CF(1) has five subunits: alpha(3), beta(3), gamma(1), delta(1), epsilon(1). CF(0) has three main subunits: a(1), b(2) and c(9-12). The alpha and beta chains form an alternating ring which encloses part of the gamma chain. CF(1) is attached to CF(0) by a central stalk formed by the gamma and epsilon chains, while a peripheral stalk is formed by the delta and b chains.

The protein localises to the cell inner membrane. Its function is as follows. Key component of the proton channel; it plays a direct role in the translocation of protons across the membrane. The chain is ATP synthase subunit a from Marinomonas sp. (strain MWYL1).